We begin with the raw amino-acid sequence, 89 residues long: NADH-ubiquinone oxidoreductase chain 4L (89 aa).

A run of 3 helical transmembrane segments spans residues 1–21 (MNIT…NRKN), 22–42 (IILM…LILV), and 57–77 (IYII…LVAF).

Belongs to the complex I subunit 4L family.

The protein resides in the mitochondrion membrane. It carries out the reaction a ubiquinone + NADH + 5 H(+)(in) = a ubiquinol + NAD(+) + 4 H(+)(out). Its function is as follows. Core subunit of the mitochondrial membrane respiratory chain NADH dehydrogenase (Complex I) that is believed to belong to the minimal assembly required for catalysis. Complex I functions in the transfer of electrons from NADH to the respiratory chain. The immediate electron acceptor for the enzyme is believed to be ubiquinone. This Podospora anserina (strain S / ATCC MYA-4624 / DSM 980 / FGSC 10383) (Pleurage anserina) protein is NADH-ubiquinone oxidoreductase chain 4L (ND4L).